The chain runs to 373 residues: 4-hydroxy-3-methylbut-2-en-1-yl diphosphate synthase (flavodoxin) (373 aa).

[4Fe-4S] cluster is bound by residues cysteine 269, cysteine 272, cysteine 304, and glutamate 311.

Belongs to the IspG family. [4Fe-4S] cluster serves as cofactor.

The catalysed reaction is (2E)-4-hydroxy-3-methylbut-2-enyl diphosphate + oxidized [flavodoxin] + H2O + 2 H(+) = 2-C-methyl-D-erythritol 2,4-cyclic diphosphate + reduced [flavodoxin]. It participates in isoprenoid biosynthesis; isopentenyl diphosphate biosynthesis via DXP pathway; isopentenyl diphosphate from 1-deoxy-D-xylulose 5-phosphate: step 5/6. In terms of biological role, converts 2C-methyl-D-erythritol 2,4-cyclodiphosphate (ME-2,4cPP) into 1-hydroxy-2-methyl-2-(E)-butenyl 4-diphosphate. This is 4-hydroxy-3-methylbut-2-en-1-yl diphosphate synthase (flavodoxin) from Baumannia cicadellinicola subsp. Homalodisca coagulata.